A 239-amino-acid polypeptide reads, in one-letter code: ATP-dependent dethiobiotin synthetase BioD (239 aa).

15 to 20 (EIGKTF) contacts ATP. Threonine 19 provides a ligand contact to Mg(2+). The active site involves lysine 40. Residues aspartate 57, 118-121 (EGVG), and 178-179 (NH) each bind ATP. 2 residues coordinate Mg(2+): aspartate 57 and glutamate 118.

The protein belongs to the dethiobiotin synthetase family. As to quaternary structure, homodimer. It depends on Mg(2+) as a cofactor.

Its subcellular location is the cytoplasm. It catalyses the reaction (7R,8S)-7,8-diammoniononanoate + CO2 + ATP = (4R,5S)-dethiobiotin + ADP + phosphate + 3 H(+). It participates in cofactor biosynthesis; biotin biosynthesis; biotin from 7,8-diaminononanoate: step 1/2. Functionally, catalyzes a mechanistically unusual reaction, the ATP-dependent insertion of CO2 between the N7 and N8 nitrogen atoms of 7,8-diaminopelargonic acid (DAPA, also called 7,8-diammoniononanoate) to form a ureido ring. This chain is ATP-dependent dethiobiotin synthetase BioD, found in Burkholderia ambifaria (strain ATCC BAA-244 / DSM 16087 / CCUG 44356 / LMG 19182 / AMMD) (Burkholderia cepacia (strain AMMD)).